The sequence spans 386 residues: Patatin-B1 (386 aa).

A signal peptide spans 1–23 (MATTKSFLILFFMILATTSSTCA). The PNPLA domain occupies 32–229 (LSIDGGGIKG…TVGDPALLSL (198 aa)). Residues 36–41 (GGGIKG) carry the GXGXXG motif. The GXSXG signature appears at 75 to 79 (GTSTG). Ser77 (nucleophile) is an active-site residue. N-linked (GlcNAc...) asparagine glycosylation occurs at Asn115. Residue Asp215 is the Proton acceptor of the active site. Residues 215 to 217 (DGG) carry the DGA/G motif.

It belongs to the patatin family.

Its subcellular location is the vacuole. Its function is as follows. Probable lipolytic acyl hydrolase (LAH), an activity which is thought to be involved in the response of tubers to pathogens. This is Patatin-B1 (PATB1) from Solanum tuberosum (Potato).